A 169-amino-acid polypeptide reads, in one-letter code: Allophycocyanin subunit beta-18 (169 aa).

Position 72 is an N4-methylasparagine (asparagine 72). A (2R,3E)-phycocyanobilin-binding site is contributed by cysteine 82.

It belongs to the phycobiliprotein family. As to quaternary structure, heterodimer of an alpha and a beta chain. Contains one covalently linked phycocyanobilin chromophore.

The protein localises to the plastid. Its subcellular location is the cyanelle thylakoid membrane. In terms of biological role, light-harvesting photosynthetic bile pigment-protein from the phycobiliprotein complex. Allophycocyanin has a maximum absorption at approximately 650 nanometers. The polypeptide is Allophycocyanin subunit beta-18 (apcF) (Cyanophora paradoxa).